A 284-amino-acid polypeptide reads, in one-letter code: Pseudouridine-5'-phosphate glycosidase (284 aa).

Glutamate 17 functions as the Proton donor in the catalytic mechanism. Lysine 77 and valine 97 together coordinate substrate. Aspartate 126 serves as a coordination point for Mn(2+). 128–130 (SQD) serves as a coordination point for substrate. The Nucleophile role is filled by lysine 147.

It belongs to the pseudouridine-5'-phosphate glycosidase family. In terms of assembly, homotrimer. Mn(2+) is required as a cofactor.

It carries out the reaction D-ribose 5-phosphate + uracil = psi-UMP + H2O. In terms of biological role, catalyzes the reversible cleavage of pseudouridine 5'-phosphate (PsiMP) to ribose 5-phosphate and uracil. Functions biologically in the cleavage direction, as part of a pseudouridine degradation pathway. The chain is Pseudouridine-5'-phosphate glycosidase from Thermotoga petrophila (strain ATCC BAA-488 / DSM 13995 / JCM 10881 / RKU-1).